A 199-amino-acid polypeptide reads, in one-letter code: Transgelin-3 (199 aa).

In terms of domain architecture, Calponin-homology (CH) spans 24–136 (ADLENKLVDW…RTLMALGSVA (113 aa)). Ser-163 carries the phosphoserine modification. One copy of the Calponin-like repeat lies at 174–199 (IGLQMGSNKGASQAGMTGYGMPRQIM). Over residues 176–188 (LQMGSNKGASQAG) the composition is skewed to polar residues. The segment at 176-199 (LQMGSNKGASQAGMTGYGMPRQIM) is disordered.

The protein belongs to the calponin family.

The protein is Transgelin-3 (TAGLN3) of Pongo abelii (Sumatran orangutan).